A 42-amino-acid polypeptide reads, in one-letter code: Delta-hexatoxin-Ar1a (42 aa).

4 cysteine pairs are disulfide-bonded: cysteine 1–cysteine 15, cysteine 8–cysteine 20, cysteine 14–cysteine 31, and cysteine 16–cysteine 42.

This sequence belongs to the neurotoxin 06 (delta-actx) family. Expressed by the venom gland.

The protein localises to the secreted. Inhibits tetrodotoxin-sensitive voltage-gated sodium channels (Nav) by binding to site 3. It slows the inactivation, causes a prolongation of action potential duration resulting in repetitive firing in autonomic and motor nerve fibers. Does not depolarize the resting potential. Does not affect tetrodotoxin-resistant sodium channels. This lethal neurotoxin is active on both insect and mammalian voltage-gated sodium channels. This Atrax robustus (Sydney funnel-web spider) protein is Delta-hexatoxin-Ar1a.